The primary structure comprises 143 residues: Large ribosomal subunit protein uL11 (143 aa).

This sequence belongs to the universal ribosomal protein uL11 family. Part of the ribosomal stalk of the 50S ribosomal subunit. Interacts with L10 and the large rRNA to form the base of the stalk. L10 forms an elongated spine to which L12 dimers bind in a sequential fashion forming a multimeric L10(L12)X complex. Post-translationally, one or more lysine residues are methylated.

Functionally, forms part of the ribosomal stalk which helps the ribosome interact with GTP-bound translation factors. This chain is Large ribosomal subunit protein uL11, found in Bordetella pertussis (strain Tohama I / ATCC BAA-589 / NCTC 13251).